A 103-amino-acid chain; its full sequence is Cytochrome c-552 (103 aa).

Residues 1-22 form the signal peptide; it reads MKTAWLGTFAASALLVAGYAQA. Heme c-binding residues include cysteine 32, cysteine 35, histidine 36, and methionine 81.

As to quaternary structure, monomer. Binds 1 heme c group covalently per subunit.

The protein resides in the periplasm. In terms of biological role, monoheme c-type cytochrome. Probable electron donor to membrane cytochrome oxidase and to periplasmic nitrite reductase. The polypeptide is Cytochrome c-552 (cyt) (Nitrosomonas europaea (strain ATCC 19718 / CIP 103999 / KCTC 2705 / NBRC 14298)).